The primary structure comprises 692 residues: Transcription factor steA (692 aa).

The DNA-binding element occupies 56–165; sequence DQLIRRFLLP…SVPHDRLFLD (110 aa). Disordered regions lie at residues 406 to 507 and 519 to 540; these read SPTY…EQSS and LPANGTVESGAPNGVGHKSDRY. Positions 470–482 are enriched in polar residues; the sequence is RSVNSTYTATLPQ. C2H2-type zinc fingers lie at residues 564–588 and 594–616; these read HSCPIPSCGRLFKRLEHLKRHVRTH and YPCPYCNKAFSRSDNLAQHRRIH. The segment at 618 to 665 is disordered; the sequence is AQQDGQPLVHEDDLENDDNESVSHDEDESPSESVHPAVPGVHGMTSMP. Residues 629–647 show a composition bias toward acidic residues; that stretch reads DDLENDDNESVSHDEDESP.

This sequence belongs to the STE12 transcription factor family.

It localises to the nucleus. In terms of biological role, transcription factor involved in sexual reproduction. Required for cleistothecial development and ascosporogenesis. Not required for asexual reproduction (conidiation). May act to repress medA expression. In Emericella nidulans (strain FGSC A4 / ATCC 38163 / CBS 112.46 / NRRL 194 / M139) (Aspergillus nidulans), this protein is Transcription factor steA (steA).